A 397-amino-acid polypeptide reads, in one-letter code: Vacuolar protein sorting-associated protein 37A (397 aa).

The interval 1–22 is disordered; the sequence is MSWLFPLTKSASSSAAGSPGGL. S18 carries the post-translational modification Phosphoserine. The VPS37 C-terminal domain maps to 308–397; that stretch reads KSTFEKKMQR…AMHSQFHAPL (90 aa).

The protein belongs to the VPS37 family. As to quaternary structure, component of the ESCRT-I complex (endosomal sorting complex required for transport I) which consists of TSG101, VPS28, a VPS37 protein (VPS37A to -D) and MVB12A or MVB12B in a 1:1:1:1 stoichiometry. Interacts with TSG101, VPS28 and HGS. Component of an ESCRT-I complex (endosomal sorting complex required for transport I) which consists of TSG101, VPS28, VPS37A and UBAP1 in a 1:1:1:1 stoichiometry. As to expression, widely expressed. Examined tissues include heart, brain, placenta, liver, skeletal muscle, kidney and pancreas. More abundant in liver. Strongly decreased or undetected in hepatomas.

Its subcellular location is the late endosome membrane. The protein resides in the nucleus. Functionally, component of the ESCRT-I complex, a regulator of vesicular trafficking process. Required for the sorting of endocytic ubiquitinated cargos into multivesicular bodies. May be involved in cell growth and differentiation. This is Vacuolar protein sorting-associated protein 37A (VPS37A) from Homo sapiens (Human).